The chain runs to 161 residues: Nucleotide-binding protein Geob_0921 (161 aa).

This sequence belongs to the YajQ family.

Its function is as follows. Nucleotide-binding protein. The sequence is that of Nucleotide-binding protein Geob_0921 from Geotalea daltonii (strain DSM 22248 / JCM 15807 / FRC-32) (Geobacter daltonii).